Consider the following 142-residue polypeptide: Large ribosomal subunit protein uL11 (142 aa).

The protein belongs to the universal ribosomal protein uL11 family. In terms of assembly, part of the ribosomal stalk of the 50S ribosomal subunit. Interacts with L10 and the large rRNA to form the base of the stalk. L10 forms an elongated spine to which L12 dimers bind in a sequential fashion forming a multimeric L10(L12)X complex. Post-translationally, one or more lysine residues are methylated.

Functionally, forms part of the ribosomal stalk which helps the ribosome interact with GTP-bound translation factors. This chain is Large ribosomal subunit protein uL11, found in Baumannia cicadellinicola subsp. Homalodisca coagulata.